A 517-amino-acid polypeptide reads, in one-letter code: Protein disulfide isomerase-like 1-2 (517 aa).

Positions 1 to 23 (MAVNLVLSFALAILISSSPTAVG) are cleaved as a signal peptide. Residues 24–143 (VDATEELKEA…IVEYLKRQVG (120 aa)) enclose the Thioredoxin 1 domain. N-linked (GlcNAc...) asparagine glycosylation is present at asparagine 41. Catalysis depends on nucleophile residues cysteine 61 and cysteine 64. Cysteine 61 and cysteine 64 are oxidised to a cystine. The N-linked (GlcNAc...) asparagine glycan is linked to asparagine 301. The Thioredoxin 2 domain maps to 357 to 484 (VEYGNLTPYV…IISFINENRG (128 aa)). Active-site nucleophile residues include cysteine 407 and cysteine 410. Residues cysteine 407 and cysteine 410 are joined by a disulfide bond. Positions 514–517 (KDEL) match the Prevents secretion from ER motif.

It belongs to the protein disulfide isomerase family.

It localises to the endoplasmic reticulum lumen. The enzyme catalyses Catalyzes the rearrangement of -S-S- bonds in proteins.. Functionally, acts as a protein-folding catalyst that interacts with nascent polypeptides to catalyze the formation, isomerization, and reduction or oxidation of disulfide bonds. May play a role in storage protein biogenesis. The sequence is that of Protein disulfide isomerase-like 1-2 (PDIL1-2) from Oryza sativa subsp. japonica (Rice).